We begin with the raw amino-acid sequence, 101 residues long: Urease subunit beta (101 aa).

Belongs to the urease beta subunit family. Heterotrimer of UreA (gamma), UreB (beta) and UreC (alpha) subunits. Three heterotrimers associate to form the active enzyme.

It localises to the cytoplasm. It catalyses the reaction urea + 2 H2O + H(+) = hydrogencarbonate + 2 NH4(+). The protein operates within nitrogen metabolism; urea degradation; CO(2) and NH(3) from urea (urease route): step 1/1. This chain is Urease subunit beta, found in Bradyrhizobium sp. (strain BTAi1 / ATCC BAA-1182).